A 347-amino-acid chain; its full sequence is Phenylalanine--tRNA ligase alpha subunit (347 aa).

Residue E262 participates in Mg(2+) binding.

This sequence belongs to the class-II aminoacyl-tRNA synthetase family. Phe-tRNA synthetase alpha subunit type 1 subfamily. In terms of assembly, tetramer of two alpha and two beta subunits. The cofactor is Mg(2+).

The protein localises to the cytoplasm. It carries out the reaction tRNA(Phe) + L-phenylalanine + ATP = L-phenylalanyl-tRNA(Phe) + AMP + diphosphate + H(+). This is Phenylalanine--tRNA ligase alpha subunit from Roseiflexus castenholzii (strain DSM 13941 / HLO8).